We begin with the raw amino-acid sequence, 415 residues long: Phosphoglycerate kinase (415 aa).

(2R)-3-phosphoglycerate-binding residues include Val-23, Asp-24, Phe-25, Asn-26, Gln-39, Arg-40, Ser-63, His-64, Gly-66, Arg-67, Leu-122, Arg-123, and Arg-170. Gly-213 serves as a coordination point for ADP. Gly-213 serves as a coordination point for CDP. AMP-binding residues include Ala-214 and Lys-215. Ala-214 provides a ligand contact to ATP. Ala-214 contacts Mg(2+). A CDP-binding site is contributed by Asp-218. Asp-218 is a binding site for Mg(2+). Residue Lys-219 participates in AMP binding. Lys-219 serves as a coordination point for ATP. Gly-237 lines the ADP pocket. Gly-237 is a CDP binding site. Gly-238 and Gly-311 together coordinate AMP. The ATP site is built by Gly-238 and Gly-311. CDP-binding residues include Gly-336 and Phe-341. Phe-341 is a binding site for ADP. Glu-342 provides a ligand contact to AMP. ATP-binding residues include Glu-342, Asp-373, and Thr-374. Asp-373 contributes to the Mg(2+) binding site.

This sequence belongs to the phosphoglycerate kinase family. In terms of assembly, monomer. The cofactor is Mg(2+).

The protein localises to the cytoplasm. It is found in the mitochondrion. It catalyses the reaction (2R)-3-phosphoglycerate + ATP = (2R)-3-phospho-glyceroyl phosphate + ADP. Its pathway is carbohydrate degradation; glycolysis; pyruvate from D-glyceraldehyde 3-phosphate: step 2/5. Functionally, catalyzes one of the two ATP producing reactions in the glycolytic pathway via the reversible conversion of 1,3-diphosphoglycerate to 3-phosphoglycerate. Both L- and D- forms of purine and pyrimidine nucleotides can be used as substrates, but the activity is much lower on pyrimidines. Negatively regulates the biosynthesis of acetyl-CoA from pyruvate in the mitochondrion. In Penicillium chrysogenum (Penicillium notatum), this protein is Phosphoglycerate kinase (PGKA).